The primary structure comprises 351 residues: Phosphate acyltransferase (351 aa).

This sequence belongs to the PlsX family. As to quaternary structure, homodimer. Probably interacts with PlsY.

Its subcellular location is the cytoplasm. The enzyme catalyses a fatty acyl-[ACP] + phosphate = an acyl phosphate + holo-[ACP]. It functions in the pathway lipid metabolism; phospholipid metabolism. Catalyzes the reversible formation of acyl-phosphate (acyl-PO(4)) from acyl-[acyl-carrier-protein] (acyl-ACP). This enzyme utilizes acyl-ACP as fatty acyl donor, but not acyl-CoA. The polypeptide is Phosphate acyltransferase (Neisseria meningitidis serogroup C / serotype 2a (strain ATCC 700532 / DSM 15464 / FAM18)).